The following is a 1388-amino-acid chain: DNA-directed RNA polymerase subunit beta' (1388 aa).

Zn(2+) is bound by residues cysteine 70, cysteine 72, cysteine 85, and cysteine 88. Mg(2+) contacts are provided by aspartate 461, aspartate 463, and aspartate 465. Residues cysteine 808, cysteine 882, cysteine 889, and cysteine 892 each coordinate Zn(2+).

Belongs to the RNA polymerase beta' chain family. As to quaternary structure, the RNAP catalytic core consists of 2 alpha, 1 beta, 1 beta' and 1 omega subunit. When a sigma factor is associated with the core the holoenzyme is formed, which can initiate transcription. The cofactor is Mg(2+). It depends on Zn(2+) as a cofactor.

It catalyses the reaction RNA(n) + a ribonucleoside 5'-triphosphate = RNA(n+1) + diphosphate. DNA-dependent RNA polymerase catalyzes the transcription of DNA into RNA using the four ribonucleoside triphosphates as substrates. The sequence is that of DNA-directed RNA polymerase subunit beta' from Acidiphilium cryptum (strain JF-5).